The primary structure comprises 306 residues: UDP-3-O-acyl-N-acetylglucosamine deacetylase (306 aa).

The Zn(2+) site is built by histidine 79, histidine 238, and aspartate 242. Catalysis depends on histidine 265, which acts as the Proton donor.

This sequence belongs to the LpxC family. Zn(2+) serves as cofactor.

It catalyses the reaction a UDP-3-O-[(3R)-3-hydroxyacyl]-N-acetyl-alpha-D-glucosamine + H2O = a UDP-3-O-[(3R)-3-hydroxyacyl]-alpha-D-glucosamine + acetate. It participates in glycolipid biosynthesis; lipid IV(A) biosynthesis; lipid IV(A) from (3R)-3-hydroxytetradecanoyl-[acyl-carrier-protein] and UDP-N-acetyl-alpha-D-glucosamine: step 2/6. In terms of biological role, catalyzes the hydrolysis of UDP-3-O-myristoyl-N-acetylglucosamine to form UDP-3-O-myristoylglucosamine and acetate, the committed step in lipid A biosynthesis. The polypeptide is UDP-3-O-acyl-N-acetylglucosamine deacetylase (Shewanella baltica (strain OS223)).